Consider the following 446-residue polypeptide: Probable glucuronosyltransferase Os04g0650300 (446 aa).

Topologically, residues 1-30 are cytoplasmic; the sequence is MKLPLLRPLWPMLSPAAGSPDSPPEPSKPS. A helical; Signal-anchor for type II membrane protein transmembrane segment spans residues 31–51; that stretch reads LPAAWLLLHALFCATSMAVGF. Topologically, residues 52-446 are lumenal; that stretch reads RFSRLIVYLL…TTLLNTEGQH (395 aa). The N-linked (GlcNAc...) asparagine glycan is linked to N87. The segment at 425–446 is disordered; sequence QQDAKPETPLKRTTLLNTEGQH.

Belongs to the glycosyltransferase 43 family.

It is found in the golgi apparatus membrane. In terms of biological role, involved in the synthesis of glucuronoxylan hemicellulose in secondary cell walls. This chain is Probable glucuronosyltransferase Os04g0650300, found in Oryza sativa subsp. japonica (Rice).